The chain runs to 210 residues: Thymidylate kinase (210 aa).

Residue 10–17 (GPEGAGKS) participates in ATP binding.

Belongs to the thymidylate kinase family.

It catalyses the reaction dTMP + ATP = dTDP + ADP. Functionally, phosphorylation of dTMP to form dTDP in both de novo and salvage pathways of dTTP synthesis. This Pseudomonas putida (strain GB-1) protein is Thymidylate kinase.